The sequence spans 450 residues: Tubulin alpha-1 chain (450 aa).

GTP is bound by residues Gln11, Glu71, Gly144, Thr145, Thr179, Asn206, and Asn228. Glu71 contacts Mg(2+). Glu254 is an active-site residue.

It belongs to the tubulin family. Dimer of alpha and beta chains. A typical microtubule is a hollow water-filled tube with an outer diameter of 25 nm and an inner diameter of 15 nM. Alpha-beta heterodimers associate head-to-tail to form protofilaments running lengthwise along the microtubule wall with the beta-tubulin subunit facing the microtubule plus end conferring a structural polarity. Microtubules usually have 13 protofilaments but different protofilament numbers can be found in some organisms and specialized cells. Requires Mg(2+) as cofactor. Undergoes a tyrosination/detyrosination cycle, the cyclic removal and re-addition of a C-terminal tyrosine residue by the enzymes tubulin tyrosine carboxypeptidase (TTCP) and tubulin tyrosine ligase (TTL), respectively.

The protein localises to the cytoplasm. The protein resides in the cytoskeleton. The catalysed reaction is GTP + H2O = GDP + phosphate + H(+). Its function is as follows. Tubulin is the major constituent of microtubules, a cylinder consisting of laterally associated linear protofilaments composed of alpha- and beta-tubulin heterodimers. Microtubules grow by the addition of GTP-tubulin dimers to the microtubule end, where a stabilizing cap forms. Below the cap, tubulin dimers are in GDP-bound state, owing to GTPase activity of alpha-tubulin. The chain is Tubulin alpha-1 chain (TUBA1) from Hordeum vulgare (Barley).